The primary structure comprises 1931 residues: Cytadherence high molecular weight protein 2 (1931 aa).

3 coiled-coil regions span residues 1626 to 1659, 1768 to 1846, and 1903 to 1930; these read KEHQ…LTES, FNTQ…IKTN, and HAKK…KQTS.

Component of the cytoskeleton-like structure which stabilizes the shape of the wall-less Mycoplasma. This cytoskeleton-like network of accessory proteins containing HMW proteins 1 to 5 allows the proper anchoring of cytadhesin proteins in the mycoplasmal membrane at the attachment organelle. The chain is Cytadherence high molecular weight protein 2 (hlp2) from Mycoplasmoides gallisepticum (strain R(low / passage 15 / clone 2)) (Mycoplasma gallisepticum).